We begin with the raw amino-acid sequence, 183 residues long: MNREQIADALRQNQVVAYPTEAVFGLGCNPQSESAVKKLLDLKQRPVEKGLILVAPSLDFFRPFVDFEQINDEQLSRLQGKYERPTTWIVPAKSTTPHFLTGKFDSIAIRLCDHPSVKALCELTGFALTSTSANLTGEPPCRTADEVRLQFGSDFPVLNEMVGRAHNPSEIRDLRTNQLFRQG.

The YrdC-like domain maps to 1-183; sequence MNREQIADAL…LRTNQLFRQG (183 aa).

Belongs to the SUA5 family. TsaC subfamily.

The protein localises to the cytoplasm. It carries out the reaction L-threonine + hydrogencarbonate + ATP = L-threonylcarbamoyladenylate + diphosphate + H2O. In terms of biological role, required for the formation of a threonylcarbamoyl group on adenosine at position 37 (t(6)A37) in tRNAs that read codons beginning with adenine. Catalyzes the conversion of L-threonine, HCO(3)(-)/CO(2) and ATP to give threonylcarbamoyl-AMP (TC-AMP) as the acyladenylate intermediate, with the release of diphosphate. The polypeptide is Threonylcarbamoyl-AMP synthase (Haemophilus influenzae (strain ATCC 51907 / DSM 11121 / KW20 / Rd)).